A 968-amino-acid polypeptide reads, in one-letter code: RNA polymerase-associated protein RapA (968 aa).

In terms of domain architecture, Helicase ATP-binding spans 164–334 (DVGRRHAPRV…FARLRLLDPN (171 aa)). 177-184 (DEVGLGKT) contacts ATP. The DEAH box motif lies at 280–283 (DEAH). Residues 490–662 (RVEWLMGYLT…YLASPDQTEG (173 aa)) form the Helicase C-terminal domain.

Belongs to the SNF2/RAD54 helicase family. RapA subfamily. As to quaternary structure, interacts with the RNAP. Has a higher affinity for the core RNAP than for the holoenzyme. Its ATPase activity is stimulated by binding to RNAP.

Its function is as follows. Transcription regulator that activates transcription by stimulating RNA polymerase (RNAP) recycling in case of stress conditions such as supercoiled DNA or high salt concentrations. Probably acts by releasing the RNAP, when it is trapped or immobilized on tightly supercoiled DNA. Does not activate transcription on linear DNA. Probably not involved in DNA repair. The chain is RNA polymerase-associated protein RapA from Shigella boydii serotype 4 (strain Sb227).